Here is a 134-residue protein sequence, read N- to C-terminus: Small ribosomal subunit protein uS9 (134 aa).

The tract at residues 114 to 134 (EVERKKYGLKKARRAPQFSKR) is disordered. The span at 120–134 (YGLKKARRAPQFSKR) shows a compositional bias: basic residues.

This sequence belongs to the universal ribosomal protein uS9 family.

This Thermotoga sp. (strain RQ2) protein is Small ribosomal subunit protein uS9.